Consider the following 554-residue polypeptide: Probable ATP-binding cassette sub-family F member 3 homolog (554 aa).

ABC transporter domains are found at residues 89 to 285 and 351 to 554; these read GDLH…ASAR and IEFV…GLGV. ATP is bound by residues 122 to 129 and 383 to 390; these read GRNGIGKT and GANGQGKS.

Belongs to the ABC transporter superfamily. ABCF family. EF3 subfamily.

The polypeptide is Probable ATP-binding cassette sub-family F member 3 homolog (Encephalitozoon cuniculi (strain GB-M1) (Microsporidian parasite)).